Here is a 332-residue protein sequence, read N- to C-terminus: uncharacterized protein (332 aa).

A helical membrane pass occupies residues 185 to 205 (MVYGYSVFNAFFILLALPNVI).

Its subcellular location is the host membrane. This is an uncharacterized protein from Sulfolobus islandicus filamentous virus (isolate Iceland/Hveragerdi) (SIFV).